Reading from the N-terminus, the 393-residue chain is S-adenosylmethionine synthase (393 aa).

Histidine 17 is an ATP binding site. Mg(2+) is bound at residue aspartate 19. Residue glutamate 45 participates in K(+) binding. The L-methionine site is built by glutamate 58 and glutamine 106. The flexible loop stretch occupies residues 106-116; sequence QSAHIAQGVNA. ATP contacts are provided by residues 171–173, 237–238, aspartate 246, 252–253, alanine 269, and lysine 273; these read DAK, KF, and RK. Position 246 (aspartate 246) interacts with L-methionine. Lysine 277 contacts L-methionine.

Belongs to the AdoMet synthase family. As to quaternary structure, homotetramer; dimer of dimers. Mg(2+) is required as a cofactor. The cofactor is K(+).

The protein localises to the cytoplasm. It carries out the reaction L-methionine + ATP + H2O = S-adenosyl-L-methionine + phosphate + diphosphate. The protein operates within amino-acid biosynthesis; S-adenosyl-L-methionine biosynthesis; S-adenosyl-L-methionine from L-methionine: step 1/1. Functionally, catalyzes the formation of S-adenosylmethionine (AdoMet) from methionine and ATP. The overall synthetic reaction is composed of two sequential steps, AdoMet formation and the subsequent tripolyphosphate hydrolysis which occurs prior to release of AdoMet from the enzyme. The sequence is that of S-adenosylmethionine synthase from Ruegeria pomeroyi (strain ATCC 700808 / DSM 15171 / DSS-3) (Silicibacter pomeroyi).